The following is a 273-amino-acid chain: Cyclic di-AMP synthase CdaA (273 aa).

A run of 3 helical transmembrane segments spans residues 12 to 32, 40 to 60, and 61 to 81; these read LGNA…IMVI, LLKG…LGLS, and TLQW…IIIF. Positions 82-242 constitute a DAC domain; sequence QPELRRALEQ…NGDLHRELTE (161 aa).

This sequence belongs to the adenylate cyclase family. DacA/CdaA subfamily. As to quaternary structure, probably a homodimer. Interacts with CdaR. May interact with GlmM.

Its subcellular location is the cell membrane. It carries out the reaction 2 ATP = 3',3'-c-di-AMP + 2 diphosphate. With respect to regulation, DAC activity is stimulated about 20-fold in E.coli by coexpression with CdaR. One of 3 paralogous diadenylate cyclases (DAC) in this bacteria, catalyzing the condensation of 2 ATP molecules into cyclic di-AMP (c-di-AMP). Upon expression in E.coli leads to c-di-AMP synthesis. Probably the main producer of c-di-AMP for the cell; is probably implicated in control of peptidoglycan synthesis. In B.subtilis c-di-AMP is a second messenger that mediates growth, DNA repair and cell wall homeostasis; it is toxic when present in excess. In Bacillus subtilis (strain 168), this protein is Cyclic di-AMP synthase CdaA.